The chain runs to 87 residues: Sec-independent protein translocase protein TatA (87 aa).

A helical membrane pass occupies residues 1–21; the sequence is MGSFSIWHWLIVLLIVVMVFG. Residues 40–87 form a disordered region; sequence KDGMKDGSTPEGTPASTTAATPPAGQVTNQQAHAADPGTIDVEAKHKG. Positions 46-64 are enriched in low complexity; that stretch reads GSTPEGTPASTTAATPPAG.

This sequence belongs to the TatA/E family. The Tat system comprises two distinct complexes: a TatABC complex, containing multiple copies of TatA, TatB and TatC subunits, and a separate TatA complex, containing only TatA subunits. Substrates initially bind to the TatABC complex, which probably triggers association of the separate TatA complex to form the active translocon.

The protein localises to the cell inner membrane. Part of the twin-arginine translocation (Tat) system that transports large folded proteins containing a characteristic twin-arginine motif in their signal peptide across membranes. TatA could form the protein-conducting channel of the Tat system. In Paracidovorax citrulli (strain AAC00-1) (Acidovorax citrulli), this protein is Sec-independent protein translocase protein TatA.